The following is a 544-amino-acid chain: NAD(P)H-quinone oxidoreductase chain 4 (544 aa).

The next 14 helical transmembrane spans lie at 29–49 (FPWL…IPLV), 60–80 (WYAL…YLNG), 115–135 (LILL…PVTF), 139–159 (LFFF…AVQD), 161–181 (LLFF…LAIW), 193–213 (FILY…AMAF), 234–254 (GFQA…LPIV), 268–288 (TAPV…YALF), 302–322 (FAPL…LTSF), 339–359 (MGFV…GAML), 360–380 (QMIS…ATYD), 400–422 (MFAM…GFVS), 442–462 (IVID…LLSM), and 488–508 (IYII…PKLV).

This sequence belongs to the complex I subunit 4 family.

The protein resides in the cellular thylakoid membrane. The enzyme catalyses a plastoquinone + NADH + (n+1) H(+)(in) = a plastoquinol + NAD(+) + n H(+)(out). The catalysed reaction is a plastoquinone + NADPH + (n+1) H(+)(in) = a plastoquinol + NADP(+) + n H(+)(out). NDH-1 shuttles electrons from NAD(P)H, via FMN and iron-sulfur (Fe-S) centers, to quinones in the respiratory chain. The immediate electron acceptor for the enzyme in this species is believed to be plastoquinone. Couples the redox reaction to proton translocation (for every two electrons transferred, four hydrogen ions are translocated across the cytoplasmic membrane), and thus conserves the redox energy in a proton gradient. The chain is NAD(P)H-quinone oxidoreductase chain 4 from Synechococcus sp. (strain RCC307).